The primary structure comprises 158 residues: Probable cyclic pyranopterin monophosphate synthase (158 aa).

Substrate contacts are provided by residues 75-77 (MCH) and 111-112 (ME). D126 is a catalytic residue.

Belongs to the MoaC family. As to quaternary structure, homohexamer; trimer of dimers.

The catalysed reaction is (8S)-3',8-cyclo-7,8-dihydroguanosine 5'-triphosphate = cyclic pyranopterin phosphate + diphosphate. It functions in the pathway cofactor biosynthesis; molybdopterin biosynthesis. In terms of biological role, catalyzes the conversion of (8S)-3',8-cyclo-7,8-dihydroguanosine 5'-triphosphate to cyclic pyranopterin monophosphate (cPMP). In Methanocorpusculum labreanum (strain ATCC 43576 / DSM 4855 / Z), this protein is Probable cyclic pyranopterin monophosphate synthase.